A 288-amino-acid chain; its full sequence is dTDP-4-keto-6-deoxy-D-glucose reductase (288 aa).

NADH contacts are provided by residues Gly12–Leu14, Asp38–Ile39, Ala62–Thr64, Tyr127, and Lys131. Residues Met13–Leu14, Asp38–Ile39, Ala62–Thr64, Tyr127, and Lys131 contribute to the NADPH site. The active-site Proton donor/acceptor is the Tyr127.

Belongs to the dTDP-4-dehydrorhamnose reductase family. Mg(2+) serves as cofactor.

It functions in the pathway antibiotic biosynthesis; novobiocin biosynthesis. Functionally, reduces the product formed from the reaction of NovW with dTDP-4-keto-6-deoxy-D-glucose to result in dTDP-5-methyl-L-rhamnose in the novobiocin biosynthesis pathway, an aminocoumarin family antibiotic that targets bacterial DNA gyrases. This Streptomyces niveus (Streptomyces spheroides) protein is dTDP-4-keto-6-deoxy-D-glucose reductase (novS).